A 456-amino-acid chain; its full sequence is UDP-N-acetylmuramoylalanine--D-glutamate ligase (456 aa).

122 to 128 (GSNGKST) is an ATP binding site.

The protein belongs to the MurCDEF family.

The protein localises to the cytoplasm. The catalysed reaction is UDP-N-acetyl-alpha-D-muramoyl-L-alanine + D-glutamate + ATP = UDP-N-acetyl-alpha-D-muramoyl-L-alanyl-D-glutamate + ADP + phosphate + H(+). The protein operates within cell wall biogenesis; peptidoglycan biosynthesis. Cell wall formation. Catalyzes the addition of glutamate to the nucleotide precursor UDP-N-acetylmuramoyl-L-alanine (UMA). The polypeptide is UDP-N-acetylmuramoylalanine--D-glutamate ligase (Saccharophagus degradans (strain 2-40 / ATCC 43961 / DSM 17024)).